A 134-amino-acid chain; its full sequence is Holo-[acyl-carrier-protein] synthase (134 aa).

Positions 8 and 57 each coordinate Mg(2+).

Belongs to the P-Pant transferase superfamily. AcpS family. Mg(2+) serves as cofactor.

The protein resides in the cytoplasm. It carries out the reaction apo-[ACP] + CoA = holo-[ACP] + adenosine 3',5'-bisphosphate + H(+). In terms of biological role, transfers the 4'-phosphopantetheine moiety from coenzyme A to a Ser of acyl-carrier-protein. The sequence is that of Holo-[acyl-carrier-protein] synthase from Rhizobium etli (strain ATCC 51251 / DSM 11541 / JCM 21823 / NBRC 15573 / CFN 42).